Here is a 412-residue protein sequence, read N- to C-terminus: 43 kDa receptor-associated protein of the synapse (412 aa).

Residue glycine 2 is the site of N-myristoyl glycine attachment. TPR repeat units lie at residues 6 to 39 (TKQQIEKGLQLYQSNQTEKALQVWTKVLEKSSDL), 83 to 116 (LESYLNLARSNEKLCEFHKTISYCKTCLGLPGTR), 123 to 156 (GQVSLSMGNAFLGLSVFQKALESFEKALRYAHNN), 163 to 196 (CRVCCSLGSFYAQVKDYEKALFFPCKAAELVNNY), 206 to 239 (AMSQYHMAVAYRLLGRLGSAMECCEESMKIALQH), 246 to 279 (ALCLLCFADIHRSRGDLETAFPRYDSAMSIMTEI), and 286 to 319 (VQALLGVAKCWVARKALDKALDAIERAQDLAEEV). Tyrosine 196 is subject to Phosphotyrosine. The RING-type zinc-finger motif lies at 363 to 403 (CGLCGESIGEKNSRLQALPCSHIFHLRCLQNNGTRSCPNCR). The residue at position 405 (serine 405) is a Phosphoserine.

The protein belongs to the RAPsyn family. In terms of processing, ubiquitinated by the BCR(KLHL8) complex, leading to its degradation.

Its subcellular location is the cell membrane. It is found in the postsynaptic cell membrane. It localises to the cytoplasm. The protein localises to the cytoskeleton. Its function is as follows. Postsynaptic protein required for clustering of nicotinic acetylcholine receptors (nAChRs) at the neuromuscular junction. It may link the receptor to the underlying postsynaptic cytoskeleton, possibly by direct association with actin or spectrin. This is 43 kDa receptor-associated protein of the synapse (RAPSN) from Homo sapiens (Human).